Consider the following 296-residue polypeptide: Acetylglutamate kinase (296 aa).

Substrate contacts are provided by residues 65–66 (GG), Arg-87, and Asn-190.

The protein belongs to the acetylglutamate kinase family. ArgB subfamily.

It is found in the cytoplasm. The catalysed reaction is N-acetyl-L-glutamate + ATP = N-acetyl-L-glutamyl 5-phosphate + ADP. The protein operates within amino-acid biosynthesis; L-arginine biosynthesis; N(2)-acetyl-L-ornithine from L-glutamate: step 2/4. In terms of biological role, catalyzes the ATP-dependent phosphorylation of N-acetyl-L-glutamate. The protein is Acetylglutamate kinase of Moorella thermoacetica (strain ATCC 39073 / JCM 9320).